Here is a 192-residue protein sequence, read N- to C-terminus: Mitochondrial import inner membrane translocase subunit Tim22 (192 aa).

Disulfide bonds link Cys-67-Cys-139 and Cys-158-Cys-177. The next 3 membrane-spanning stretches (helical) occupy residues 72-92, 123-141, and 168-188; these read VLAC…TAGI, YAKN…ECLV, and AGVK…AAID.

Belongs to the Tim17/Tim22/Tim23 family. As to quaternary structure, component of the TIM22 complex, whose core is composed of TIMM22, associated with peripheral protein FXC1/TIMM10B and the 70 kDa heterohexamer. In most cases, the 70 kDa complex is composed of TIMM9 and TIMM10 (TIMM10A or TIMM10B). A small fraction of the 70 kDa complex is composed of TIMM8 (TIMM8A/DDP1 or TIMM8B/DDP2) and TIMM13. The TIM22 complex also contains AGK and TIMM29. Interacts directly with TIMM9, TIMM10A and FXC1/TIMM10B. Interacts (when oxidized) with TIMM29; interaction is direct. Disulfide bonds promote efficient assembly of the TIM22 complex.

Its subcellular location is the mitochondrion inner membrane. Essential core component of the TIM22 complex, a complex that mediates the import and insertion of multi-pass transmembrane proteins into the mitochondrial inner membrane. In the TIM22 complex, it constitutes the voltage-activated and signal-gated channel. Forms a twin-pore translocase that uses the membrane potential as external driving force in 2 voltage-dependent steps. This chain is Mitochondrial import inner membrane translocase subunit Tim22 (Timm22), found in Rattus norvegicus (Rat).